The sequence spans 798 residues: MSSSQSPSTPSASLVDSSDSKHPDDLPQIYKRRSVWTSSEDAVSSSNSPEQTTPFTVREDTNADIARELDLPDDPEPHLVRRSSAPMVDEAGTSNWQDASEPLMPTVKIEDFLYFGPNETEDILRLNEQKAFEKAEKKKRKKKKKAVMPNPPGSSMCTEQSLSDLKARFGLGAVTLRVPSPEERADSPPAGFYTLYEGFFYGCLLWLPIPRLVLEYVTSYQIALSQITMRSLRHLLGILIRSYESETEITLAHLRNFLEIRRVPKSEVDRYYISPAKGKKIIDGFPSKDEPYTDHFFFVAIEDAIHEDLLGTVLTRWGILERTLKFLEPIPDDFLSAFHALSARKCDWLKHFSRERVECALRLLHGVSCPTSSESSDHRTQFFVDMQSTKLTLREVYAKKKEDKERRLAEERRLVNTGLISPRADPEATQDGNVIPDATAPQTAPEASRDGVNPYTAGPVDAAPAEAQGAEPSAAAPEAVLALPAIDKAAGKRIRVDDVSSKKKKKKKKASGSEVEKILPIFEDRTASANLLGGCVGPLLPPPDTLLESRKYAETASHFLRAVASMNRMVHSYDSAMRSNMEVAGKLAEAESRIQAIEREKNEALSEAAAAKLEKEEVERTAHVNKENAIKMAEQNLKANSEIVRLKRMLSEARGLRDSEVARAVQTTRREVSETFIAKMKNAEHKVSLLDEVNDRFMYLSQARANAQLIEALEGGGVLESEKEQVDEWLKDFADAEVNLNRFMSELKDDLKAPAPEPAPLSPGGHRSVESLADEAGITDQAGSLLPAKDNRPSEDLD.

Low complexity predominate over residues 1 to 13; it reads MSSSQSPSTPSAS. A chloroplast-targeting transit peptide spans 1-58; it reads MSSSQSPSTPSASLVDSSDSKHPDDLPQIYKRRSVWTSSEDAVSSSNSPEQTTPFTVR. 3 disordered regions span residues 1-99, 135-158, and 417-473; these read MSSS…WQDA, AEKK…SMCT, and TGLI…AEPS. The segment covering 35 to 55 has biased composition (polar residues); sequence VWTSSEDAVSSSNSPEQTTPF. Residues 57-79 show a composition bias toward basic and acidic residues; that stretch reads VREDTNADIARELDLPDDPEPHL. The span at 137-146 shows a compositional bias: basic residues; the sequence is KKKRKKKKKA. The span at 462–473 shows a compositional bias: low complexity; that stretch reads AAPAEAQGAEPS. A coiled-coil region spans residues 578–658; sequence RSNMEVAGKL…MLSEARGLRD (81 aa). A disordered region spans residues 749-798; it reads DDLKAPAPEPAPLSPGGHRSVESLADEAGITDQAGSLLPAKDNRPSEDLD. At S762 the chain carries Phosphoserine. The span at 789–798 shows a compositional bias: basic and acidic residues; the sequence is KDNRPSEDLD.

The protein localises to the plastid. The protein resides in the chloroplast. This is an uncharacterized protein from Arabidopsis thaliana (Mouse-ear cress).